Consider the following 465-residue polypeptide: ATP synthase subunit beta (465 aa).

An ATP-binding site is contributed by 152–159 (GGAGVGKT).

Belongs to the ATPase alpha/beta chains family. In terms of assembly, F-type ATPases have 2 components, CF(1) - the catalytic core - and CF(0) - the membrane proton channel. CF(1) has five subunits: alpha(3), beta(3), gamma(1), delta(1), epsilon(1). CF(0) has three main subunits: a(1), b(2) and c(9-12). The alpha and beta chains form an alternating ring which encloses part of the gamma chain. CF(1) is attached to CF(0) by a central stalk formed by the gamma and epsilon chains, while a peripheral stalk is formed by the delta and b chains.

The protein localises to the cell inner membrane. The enzyme catalyses ATP + H2O + 4 H(+)(in) = ADP + phosphate + 5 H(+)(out). Its function is as follows. Produces ATP from ADP in the presence of a proton gradient across the membrane. The catalytic sites are hosted primarily by the beta subunits. The polypeptide is ATP synthase subunit beta (Campylobacter concisus (strain 13826)).